The primary structure comprises 308 residues: MDIDQARLTHLQQLEAESIHIIREVAAEFENPVMLYSIGKDSAVMLHLAKKAFYPGKPPFPLMHVDTTWKFRDMIALRDKQAKENGWDLIVHVNQDGVEAGINPFTAGSAKHTDVMKTEGLKQALNRHKFDAAFGGARRDEEKSRAKERVYSFRDKNHRWDPKNQRPELWNIYNGRIDKGESIRVFPLSNWTELDIWQYIYLENIEIVPLYFAAERPVVERDGMLIMIDDERILEYLTPEEKASIQTRKVRFRTLGCYPLTGAVESEAATLPEIIQEMLLTRTSERQGRLIDHDSAGSMEKKKMEGYF.

It belongs to the PAPS reductase family. CysD subfamily. Heterodimer composed of CysD, the smaller subunit, and CysN.

It catalyses the reaction sulfate + ATP + H(+) = adenosine 5'-phosphosulfate + diphosphate. Its pathway is sulfur metabolism; hydrogen sulfide biosynthesis; sulfite from sulfate: step 1/3. With CysN forms the ATP sulfurylase (ATPS) that catalyzes the adenylation of sulfate producing adenosine 5'-phosphosulfate (APS) and diphosphate, the first enzymatic step in sulfur assimilation pathway. APS synthesis involves the formation of a high-energy phosphoric-sulfuric acid anhydride bond driven by GTP hydrolysis by CysN coupled to ATP hydrolysis by CysD. This is Sulfate adenylyltransferase subunit 2 from Chromobacterium violaceum (strain ATCC 12472 / DSM 30191 / JCM 1249 / CCUG 213 / NBRC 12614 / NCIMB 9131 / NCTC 9757 / MK).